A 314-amino-acid polypeptide reads, in one-letter code: Serine/threonine-protein phosphatase PP2A-5 catalytic subunit (314 aa).

Mn(2+) is bound by residues Asp-62, His-64, Asp-90, and Asn-122. His-123 serves as the catalytic Proton donor. Residues His-172 and His-246 each coordinate Mn(2+).

The protein belongs to the PPP phosphatase family. PP-2A subfamily. It depends on Mn(2+) as a cofactor.

It is found in the cytoplasm. The catalysed reaction is O-phospho-L-seryl-[protein] + H2O = L-seryl-[protein] + phosphate. The enzyme catalyses O-phospho-L-threonyl-[protein] + H2O = L-threonyl-[protein] + phosphate. The sequence is that of Serine/threonine-protein phosphatase PP2A-5 catalytic subunit (NPP5) from Nicotiana tabacum (Common tobacco).